The following is a 395-amino-acid chain: Phosphoserine aminotransferase (395 aa).

Thr20 is modified (phosphothreonine). 80-81 contacts pyridoxal 5'-phosphate; the sequence is GT. At Ser112 the chain carries Phosphoserine. Residues Trp113, Thr170, Asp194, and Gln217 each contribute to the pyridoxal 5'-phosphate site. At Lys218 the chain carries N6-(pyridoxal phosphate)lysine. 271-272 provides a ligand contact to pyridoxal 5'-phosphate; it reads NT.

It belongs to the class-V pyridoxal-phosphate-dependent aminotransferase family. SerC subfamily. As to quaternary structure, homodimer. Requires pyridoxal 5'-phosphate as cofactor.

The catalysed reaction is O-phospho-L-serine + 2-oxoglutarate = 3-phosphooxypyruvate + L-glutamate. It catalyses the reaction 4-(phosphooxy)-L-threonine + 2-oxoglutarate = (R)-3-hydroxy-2-oxo-4-phosphooxybutanoate + L-glutamate. It functions in the pathway amino-acid biosynthesis; L-serine biosynthesis; L-serine from 3-phospho-D-glycerate: step 2/3. Functionally, phosphoserine aminotransferase (PSAT) is a pyridoxal 5'-phosphate-dependent enzyme involved in the second step of the phosphorylated pathway of serine biosynthesis. Catalyzes the reversible conversion of 3-phosphohydroxypyruvate to phosphoserine and of 3-hydroxy-2-oxo-4-phosphonooxybutanoate to phosphohydroxythreonine. Plays an indirect role in purine biosynthesis. The protein is Phosphoserine aminotransferase of Saccharomyces cerevisiae (strain ATCC 204508 / S288c) (Baker's yeast).